Consider the following 1290-residue polypeptide: Period circadian protein homolog 1 (1290 aa).

The disordered stretch occupies residues M1–T134. The interaction with BTRC stretch occupies residues M1–P151. Residues V25–G38 show a composition bias toward pro residues. 2 stretches are compositionally biased toward low complexity: residues N48–S57 and G64–E115. Residues Q116–A132 are compositionally biased toward polar residues. Phosphothreonine; by CSNK1E is present on T121. A phosphoserine; by CSNK1E mark is found at S122 and S126. Positions L138–L147 match the Nuclear export signal 1 motif. PAS domains follow at residues I208 to L275 and Y348 to Q414. The 44-residue stretch at H422–P465 folds into the PAC domain. The short motif at L489–L498 is the Nuclear export signal 2 element. Disordered stretches follow at residues G508–V544 and T646–V698. 2 stretches are compositionally biased toward low complexity: residues S517–G533 and A652–A662. Positions E596–S815 are required for phosphorylation by CSNK1E. A phosphoserine mark is found at S661, S663, and S704. Disordered regions lie at residues G749–A772, R805–T874, and A938–R977. The span at A751 to A769 shows a compositional bias: pro residues. S815 bears the Phosphoserine mark. The Nuclear localization signal motif lies at A827–R843. A compositionally biased stretch (basic residues) spans S830–N847. Residues S860–T874 show a composition bias toward pro residues. Over residues A950–L961 the composition is skewed to low complexity. Phosphoserine is present on residues S979 and S980. The Nuclear export signal 3 signature appears at L982 to L989. Residues E996–S1037 form a disordered region. An LXXLL motif is present at residues L1043–L1047. Over residues S1051–S1062 the composition is skewed to low complexity. Disordered stretches follow at residues S1051–F1098 and S1207–S1290. Positions L1063–E1077 are enriched in gly residues. Low complexity predominate over residues G1078–S1095. Residues S1149–S1290 form a CRY binding domain region. Residues G1236–G1248 show a composition bias toward gly residues.

In terms of assembly, homodimer. Component of the circadian core oscillator, which includes the CRY proteins, CLOCK or NPAS2, BMAL1 or BMAL2, CSNK1D and/or CSNK1E, TIMELESS, and the PER proteins. Interacts directly with TIMELESS, PER2, PER3, CRY1 and CRY2. Interacts with BMAL1 and CLOCK. Interacts with GPRASP1. Interacts (phosphorylated) with BTRC and FBXW11; the interactions trigger proteasomal degradation. Interacts with NONO, WDR5 and SFPQ. Interacts with USP2. Interacts with HNF4A. Post-translationally, phosphorylated on serine residues by CSNK1D, CSNK1E and probably also by CSNK1G2. Phosphorylation by CSNK1D or CSNK1E promotes nuclear location of PER proteins as well as ubiquitination and subsequent degradation. May be dephosphorylated by PP1. In terms of processing, ubiquitinated; requires phosphorylation by CSNK1E and interaction with BTRC and FBXW11. Deubiquitinated by USP2. Widely expressed. Expressed in hair follicles (at protein level). Found in heart, brain, placenta, lung, liver, skeletal muscle, pancreas, kidney, spleen, thymus, prostate, testis, ovary and small intestine. Highest level in skeletal muscle.

It is found in the nucleus. It localises to the cytoplasm. Its function is as follows. Transcriptional repressor which forms a core component of the circadian clock. The circadian clock, an internal time-keeping system, regulates various physiological processes through the generation of approximately 24 hour circadian rhythms in gene expression, which are translated into rhythms in metabolism and behavior. It is derived from the Latin roots 'circa' (about) and 'diem' (day) and acts as an important regulator of a wide array of physiological functions including metabolism, sleep, body temperature, blood pressure, endocrine, immune, cardiovascular, and renal function. Consists of two major components: the central clock, residing in the suprachiasmatic nucleus (SCN) of the brain, and the peripheral clocks that are present in nearly every tissue and organ system. Both the central and peripheral clocks can be reset by environmental cues, also known as Zeitgebers (German for 'timegivers'). The predominant Zeitgeber for the central clock is light, which is sensed by retina and signals directly to the SCN. The central clock entrains the peripheral clocks through neuronal and hormonal signals, body temperature and feeding-related cues, aligning all clocks with the external light/dark cycle. Circadian rhythms allow an organism to achieve temporal homeostasis with its environment at the molecular level by regulating gene expression to create a peak of protein expression once every 24 hours to control when a particular physiological process is most active with respect to the solar day. Transcription and translation of core clock components (CLOCK, NPAS2, BMAL1, BMAL2, PER1, PER2, PER3, CRY1 and CRY2) plays a critical role in rhythm generation, whereas delays imposed by post-translational modifications (PTMs) are important for determining the period (tau) of the rhythms (tau refers to the period of a rhythm and is the length, in time, of one complete cycle). A diurnal rhythm is synchronized with the day/night cycle, while the ultradian and infradian rhythms have a period shorter and longer than 24 hours, respectively. Disruptions in the circadian rhythms contribute to the pathology of cardiovascular diseases, cancer, metabolic syndromes and aging. A transcription/translation feedback loop (TTFL) forms the core of the molecular circadian clock mechanism. Transcription factors, CLOCK or NPAS2 and BMAL1 or BMAL2, form the positive limb of the feedback loop, act in the form of a heterodimer and activate the transcription of core clock genes and clock-controlled genes (involved in key metabolic processes), harboring E-box elements (5'-CACGTG-3') within their promoters. The core clock genes: PER1/2/3 and CRY1/2 which are transcriptional repressors form the negative limb of the feedback loop and interact with the CLOCK|NPAS2-BMAL1|BMAL2 heterodimer inhibiting its activity and thereby negatively regulating their own expression. This heterodimer also activates nuclear receptors NR1D1/2 and RORA/B/G, which form a second feedback loop and which activate and repress BMAL1 transcription, respectively. Regulates circadian target genes expression at post-transcriptional levels, but may not be required for the repression at transcriptional level. Controls PER2 protein decay. Represses CRY2 preventing its repression on CLOCK/BMAL1 target genes such as FXYD5 and SCNN1A in kidney and PPARA in liver. Besides its involvement in the maintenance of the circadian clock, has an important function in the regulation of several processes. Participates in the repression of glucocorticoid receptor NR3C1/GR-induced transcriptional activity by reducing the association of NR3C1/GR to glucocorticoid response elements (GREs) by BMAL1:CLOCK. Plays a role in the modulation of the neuroinflammatory state via the regulation of inflammatory mediators release, such as CCL2 and IL6. In spinal astrocytes, negatively regulates the MAPK14/p38 and MAPK8/JNK MAPK cascades as well as the subsequent activation of NFkappaB. Coordinately regulates the expression of multiple genes that are involved in the regulation of renal sodium reabsorption. Can act as gene expression activator in a gene and tissue specific manner, in kidney enhances WNK1 and SLC12A3 expression in collaboration with CLOCK. Modulates hair follicle cycling. Represses the CLOCK-BMAL1 induced transcription of BHLHE40/DEC1. In Homo sapiens (Human), this protein is Period circadian protein homolog 1 (PER1).